Here is a 120-residue protein sequence, read N- to C-terminus: Crustacean hyperglycemic hormones 1 (120 aa).

The signal sequence occupies residues 1 to 24; that stretch reads MIAFRAVWSALLASLLLLLLAPSA. 3 disulfide bridges follow: Cys53-Cys89, Cys69-Cys85, and Cys72-Cys98. The residue at position 118 (Val118) is a Valine amide.

Belongs to the arthropod CHH/MIH/GIH/VIH hormone family. Produced by the medulla terminalis X-organ in the eyestalks and transported to the sinus gland where they are stored and released.

It is found in the secreted. Its function is as follows. Hormone found in the sinus gland of isopods and decapods which controls the blood sugar level. Has a secretagogue action over the amylase released from the midgut gland. May act as a stress hormone and may be involved in the control of molting and reproduction. The polypeptide is Crustacean hyperglycemic hormones 1 (Penaeus japonicus (Kuruma prawn)).